A 433-amino-acid polypeptide reads, in one-letter code: Peptidoglycan glycosyltransferase RodA (433 aa).

12 helical membrane-spanning segments follow: residues 9-29, 44-64, 74-94, 100-120, 158-178, 181-201, 221-241, 249-269, 295-315, 341-361, 378-398, and 400-420; these read FDYLLLLTMLALTSIGILFIY, YLKQIVWAVMGVVLMLSVSMY, TLIFAGFILLLIYTRLFGRYV, WIGVGEFGIQISEFAKIAYIL, LGTASVYLPIFLVMCFIAGFP, LIFAVVCVVLLTLLFTLLPLW, LSLFVFFSLSATSAVAVVGYL, YWITYALGMVSISYGASLLGV, WHIIQSMIAIGSGGAFGMGYL, WGFVGGVIVFGLYLLFFLHTL, GVLGMFLFHFVVNVGMTMGIM, and ITGIPLLLLSYGGSSLWTAMI.

The protein belongs to the SEDS family. MrdB/RodA subfamily.

Its subcellular location is the cell inner membrane. It carries out the reaction [GlcNAc-(1-&gt;4)-Mur2Ac(oyl-L-Ala-gamma-D-Glu-L-Lys-D-Ala-D-Ala)](n)-di-trans,octa-cis-undecaprenyl diphosphate + beta-D-GlcNAc-(1-&gt;4)-Mur2Ac(oyl-L-Ala-gamma-D-Glu-L-Lys-D-Ala-D-Ala)-di-trans,octa-cis-undecaprenyl diphosphate = [GlcNAc-(1-&gt;4)-Mur2Ac(oyl-L-Ala-gamma-D-Glu-L-Lys-D-Ala-D-Ala)](n+1)-di-trans,octa-cis-undecaprenyl diphosphate + di-trans,octa-cis-undecaprenyl diphosphate + H(+). It participates in cell wall biogenesis; peptidoglycan biosynthesis. In terms of biological role, peptidoglycan polymerase that is essential for cell wall elongation. The chain is Peptidoglycan glycosyltransferase RodA from Treponema pallidum (strain Nichols).